Here is a 134-residue protein sequence, read N- to C-terminus: Terepressin/terephysin (134 aa).

The signal sequence occupies residues 1–33 (MKCSVLPRSRLSWTMCVLLLPLLMLMLEGGVQG). Cys-34 and Cys-39 are oxidised to a cystine. The propeptide occupies 44-50 (KRAVDSV). 7 cysteine pairs are disulfide-bonded: Cys-56–Cys-100, Cys-59–Cys-73, Cys-67–Cys-90, Cys-74–Cys-80, Cys-107–Cys-121, Cys-115–Cys-133, and Cys-122–Cys-127.

It belongs to the vasopressin/oxytocin family. In terms of processing, contains 7 disulfide bonds. Expressed by the venom duct.

It localises to the secreted. This chain is Terepressin/terephysin, found in Terebra subulata (Chocolate spotted auger).